The sequence spans 263 residues: MGLMNAFDSQTEDSSPAIGRNLRSRPLARKKLSEMVEEELEQMIRRREFGEGEQLPSERELMAFFNVGRPSVREALAALKRKGLVQINNGERARVSRPSADTIIGELSGMAKDFLSHPGGIAHFEQLRLFFESSLVRYAAEHATDEQIDLLAKALEINSQSLDNNAAFIRSDVDFHRVLAEIPGNPIFMAIHVALLDWLIAARPTVADQALHEHNNVSYQQHIAIVDAIRRHDPDEADRALQSHLNSVSATWHAFGQTTNKKK.

A disordered region spans residues 1 to 22 (MGLMNAFDSQTEDSSPAIGRNL). The region spanning 30-98 (KKLSEMVEEE…NGERARVSRP (69 aa)) is the HTH gntR-type domain. Positions 58 to 77 (ERELMAFFNVGRPSVREALA) form a DNA-binding region, H-T-H motif.

Belongs to the NanR family.

Functionally, transcriptional repressor that controls expression of the genes required for the catabolism of sialic acids. This chain is HTH-type transcriptional repressor NanR, found in Escherichia coli (strain 55989 / EAEC).